The following is a 273-amino-acid chain: MMAARMMAAGLAATALSAHAFRIPTPGEQDARIQTVPYHPEEVVLVRAWNGYVTRIVFDEQEKIIDVAAGFADGWQFSPEGNVLYIKAKSFPAQGSPAQAPEPGLWNTNLLVKTDRRLYDFDLVLASADAATPQALQRSRMAYRLQFRYPAAPQAASRASPVGPAVPAGALNRRYAMQVGNGSDGIAPIAAYDDGRHTWLTFRPGQPFPAVFAVAPDGTETLVNLHIDNQSLVIHRVAPVLMLRSGASVIRIVNQNGDASESPAFECHAEPAL.

Positions 1–20 (MMAARMMAAGLAATALSAHA) are cleaved as a signal peptide.

It belongs to the TrbG/VirB9 family. Forms a complex with PtlI.

It is found in the cell outer membrane. Functionally, component of the type IV secretion system ptl required for secretion of assembled pertussis toxin (PTX) through the outer membrane. This Bordetella pertussis (strain Tohama I / ATCC BAA-589 / NCTC 13251) protein is Type IV secretion system protein PtlF (ptlF).